Reading from the N-terminus, the 427-residue chain is D-inositol 3-phosphate glycosyltransferase (427 aa).

Position 12 (histidine 12) interacts with 1D-myo-inositol 3-phosphate. UDP-N-acetyl-alpha-D-glucosamine-binding positions include 18-19 (QP) and glycine 26. Residues 23–28 (DAGGMN), lysine 81, tyrosine 113, threonine 137, and arginine 157 each bind 1D-myo-inositol 3-phosphate. 3 residues coordinate UDP-N-acetyl-alpha-D-glucosamine: arginine 234, lysine 239, and arginine 297. The Mg(2+) site is built by tyrosine 306, glutamine 307, and alanine 309. UDP-N-acetyl-alpha-D-glucosamine-binding residues include glutamate 319 and glutamate 327. Position 333 (threonine 333) interacts with Mg(2+).

This sequence belongs to the glycosyltransferase group 1 family. MshA subfamily. As to quaternary structure, homodimer.

The enzyme catalyses 1D-myo-inositol 3-phosphate + UDP-N-acetyl-alpha-D-glucosamine = 1D-myo-inositol 2-acetamido-2-deoxy-alpha-D-glucopyranoside 3-phosphate + UDP + H(+). In terms of biological role, catalyzes the transfer of a N-acetyl-glucosamine moiety to 1D-myo-inositol 3-phosphate to produce 1D-myo-inositol 2-acetamido-2-deoxy-glucopyranoside 3-phosphate in the mycothiol biosynthesis pathway. The protein is D-inositol 3-phosphate glycosyltransferase of Corynebacterium diphtheriae (strain ATCC 700971 / NCTC 13129 / Biotype gravis).